Here is a 146-residue protein sequence, read N- to C-terminus: D-aminoacyl-tRNA deacylase (146 aa).

Positions 137-138 match the Gly-cisPro motif, important for rejection of L-amino acids motif; sequence GP.

The protein belongs to the DTD family. As to quaternary structure, homodimer.

It localises to the cytoplasm. The catalysed reaction is glycyl-tRNA(Ala) + H2O = tRNA(Ala) + glycine + H(+). The enzyme catalyses a D-aminoacyl-tRNA + H2O = a tRNA + a D-alpha-amino acid + H(+). Functionally, an aminoacyl-tRNA editing enzyme that deacylates mischarged D-aminoacyl-tRNAs. Also deacylates mischarged glycyl-tRNA(Ala), protecting cells against glycine mischarging by AlaRS. Acts via tRNA-based rather than protein-based catalysis; rejects L-amino acids rather than detecting D-amino acids in the active site. By recycling D-aminoacyl-tRNA to D-amino acids and free tRNA molecules, this enzyme counteracts the toxicity associated with the formation of D-aminoacyl-tRNA entities in vivo and helps enforce protein L-homochirality. The chain is D-aminoacyl-tRNA deacylase from Cellvibrio japonicus (strain Ueda107) (Pseudomonas fluorescens subsp. cellulosa).